The chain runs to 456 residues: Histidine--tRNA ligase (456 aa).

This sequence belongs to the class-II aminoacyl-tRNA synthetase family. As to quaternary structure, homodimer.

The protein resides in the cytoplasm. The enzyme catalyses tRNA(His) + L-histidine + ATP = L-histidyl-tRNA(His) + AMP + diphosphate + H(+). The sequence is that of Histidine--tRNA ligase from Christiangramia forsetii (strain DSM 17595 / CGMCC 1.15422 / KT0803) (Gramella forsetii).